The chain runs to 2623 residues: Immunoglobulin superfamily member 10 (2623 aa).

The signal sequence occupies residues 1–28 (MKVKGRGITCLLVSFAVICLVATPGGKA). In terms of domain architecture, LRRNT spans 29 to 56 (CPRRCACYMPTEVHCTFRYLTSIPDSIP). LRR repeat units lie at residues 58–79 (NVERINLGYNSLVRLMETDFSG), 82–103 (KLELLMLHSNGIHTIPDKTFSD), 106–127 (ALQVLKMSYNKVRKLQKDTFYG), 130–151 (SLTRLHMDHNNIEFINPEVFYG), 154–175 (FLRLVHLEGNQLTKLHPDTFVS), and 186–207 (FIKFLYLSDNFLTSLPQEMVSY). The region spanning 219-281 (NPWTCDCHLK…VSAAAFQCAK (63 aa)) is the LRRCT domain. Residues Asn319 and Asn439 are each glycosylated (N-linked (GlcNAc...) asparagine). 2 consecutive Ig-like C2-type domains span residues 461-567 (PRAE…YRIT) and 571-661 (PLVE…FQVS). 2 disulfides stabilise this stretch: Cys497–Cys551 and Cys595–Cys645. Asn627 carries N-linked (GlcNAc...) asparagine glycosylation. Disordered regions lie at residues 668 to 692 (RPLEHDGETEGSGLDESNPIAHLKE) and 767 to 788 (AMPDKRENTTVSPPPVVTQLPN). N-linked (GlcNAc...) asparagine glycans are attached at residues Asn774 and Asn999. Disordered stretches follow at residues 1334-1376 (TQTE…AMTP) and 1434-1453 (STIASETTLSSKSHQSTTTR). Residues 1335 to 1356 (QTERSRAQTIQREQEPQKKNRT) show a composition bias toward basic and acidic residues. Residues 1357–1373 (DPNISPDQSSGFTTPTA) show a composition bias toward polar residues. 10 consecutive Ig-like C2-type domains span residues 1648 to 1739 (PRIV…VTLS), 1745 to 1836 (PRIL…VKIQ), 1841 to 1933 (PPVI…VMLT), 1941 to 2034 (PRIE…VSLR), 2037 to 2135 (PAKI…VHLT), 2141 to 2229 (PRIR…YKLD), 2234 to 2331 (PPLI…LEVL), 2337 to 2427 (PTFR…VILE), 2432 to 2518 (PVIL…TLIT), and 2528 to 2623 (PRIT…IQVI). 3 cysteine pairs are disulfide-bonded: Cys1670–Cys1723, Cys1767–Cys1820, and Cys1864–Cys1917. Residues Asn1899 and Asn1962 are each glycosylated (N-linked (GlcNAc...) asparagine). 7 cysteine pairs are disulfide-bonded: Cys1963/Cys2016, Cys2060/Cys2119, Cys2163/Cys2213, Cys2261/Cys2313, Cys2359/Cys2411, Cys2454/Cys2506, and Cys2550/Cys2605. N-linked (GlcNAc...) asparagine glycosylation is present at Asn2101. The residue at position 2603 (Tyr2603) is a Phosphotyrosine.

The protein resides in the secreted. Its function is as follows. Involved in the control of early migration of neurons expressing gonadotropin-releasing hormone (GNRH neurons). May be involved in the maintenance of osteochondroprogenitor cells pool. The sequence is that of Immunoglobulin superfamily member 10 (IGSF10) from Homo sapiens (Human).